Here is a 629-residue protein sequence, read N- to C-terminus: 1-deoxy-D-xylulose-5-phosphate synthase (629 aa).

Thiamine diphosphate is bound by residues H72 and 113–115 (GHA). D144 is a Mg(2+) binding site. Thiamine diphosphate-binding positions include 145–146 (GA), N174, Y287, and E370. N174 is a Mg(2+) binding site.

Belongs to the transketolase family. DXPS subfamily. In terms of assembly, homodimer. The cofactor is Mg(2+). Requires thiamine diphosphate as cofactor.

The catalysed reaction is D-glyceraldehyde 3-phosphate + pyruvate + H(+) = 1-deoxy-D-xylulose 5-phosphate + CO2. Its pathway is metabolic intermediate biosynthesis; 1-deoxy-D-xylulose 5-phosphate biosynthesis; 1-deoxy-D-xylulose 5-phosphate from D-glyceraldehyde 3-phosphate and pyruvate: step 1/1. Catalyzes the acyloin condensation reaction between C atoms 2 and 3 of pyruvate and glyceraldehyde 3-phosphate to yield 1-deoxy-D-xylulose-5-phosphate (DXP). The polypeptide is 1-deoxy-D-xylulose-5-phosphate synthase (Prochlorococcus marinus (strain MIT 9312)).